The primary structure comprises 201 residues: Small ribosomal subunit protein uS4c (201 aa).

Residues 16–37 form a disordered region; that stretch reads GALPGLTSKRPRSGSDLRNQSR. Residues 89-152 form the S4 RNA-binding domain; sequence MRLDNTLFRL…RSRTLIQNHI (64 aa).

It belongs to the universal ribosomal protein uS4 family. Part of the 30S ribosomal subunit. Contacts protein S5. The interaction surface between S4 and S5 is involved in control of translational fidelity.

The protein resides in the plastid. The protein localises to the chloroplast. Its function is as follows. One of the primary rRNA binding proteins, it binds directly to 16S rRNA where it nucleates assembly of the body of the 30S subunit. With S5 and S12 plays an important role in translational accuracy. This is Small ribosomal subunit protein uS4c (rps4) from Chloranthus spicatus (Chulantree).